Here is a 278-residue protein sequence, read N- to C-terminus: Putative phosphatase MG265 (278 aa).

Residue Asp-9 is the Nucleophile of the active site. Asp-9 contacts Mg(2+). Phosphate is bound at residue Leu-10. Asp-11 is a binding site for Mg(2+). Phosphate-binding positions include Ser-43–Gly-44 and Lys-204. Asp-227 lines the Mg(2+) pocket. Asn-230 is a phosphate binding site.

The protein belongs to the HAD-like hydrolase superfamily. Cof family. Mg(2+) serves as cofactor.

The sequence is that of Putative phosphatase MG265 from Mycoplasma genitalium (strain ATCC 33530 / DSM 19775 / NCTC 10195 / G37) (Mycoplasmoides genitalium).